The following is a 317-amino-acid chain: Apolipoprotein E (317 aa).

The signal sequence occupies residues 1–18 (MKVLWVALVITLLAGCQA). Tandem repeats lie at residues 80–101 (VLMD…EQLG), 102–123 (PVAQ…ARLA), 124–145 (SDMQ…AMMG), 146–167 (HTTD…KRLL), 168–189 (RDAE…EGSE), 190–211 (RSVS…ARAA), 212–233 (TVGT…QKLR), and 234–255 (GRVE…EQLD). Residues 80 to 255 (VLMDETMKEV…HLEEMREQLD (176 aa)) are 8 X 22 AA approximate tandem repeats. Methionine sulfoxide is present on Met143. Residues 158 to 168 (HLRKLRKRLLR) form an LDL and other lipoprotein receptors binding region. Residue 162 to 165 (LRKR) coordinates heparin. A lipid-binding and lipoprotein association region spans residues 210–290 (AATVGTLASQ…SWFEPLVEDM (81 aa)). 229 to 236 (HQKLRGRV) lines the heparin pocket. Residues 266–317 (TQMRLQAEAFQARLKSWFEPLVEDMQRQWAGLVEKVQLAMATSSTSAPSENH) form a homooligomerization region. Residues 278–290 (RLKSWFEPLVEDM) are specificity for association with VLDL.

Belongs to the apolipoprotein A1/A4/E family. As to quaternary structure, homotetramer. May interact with ABCA1; functionally associated with ABCA1 in the biogenesis of HDLs. May interact with APP/A4 amyloid-beta peptide; the interaction is extremely stable in vitro but its physiological significance is unclear. May interact with MAPT. May interact with MAP2. In the cerebrospinal fluid, interacts with secreted SORL1. Interacts with PMEL; this allows the loading of PMEL luminal fragment on ILVs to induce fibril nucleation. In terms of processing, APOE exists as multiple glycosylated and sialylated glycoforms within cells and in plasma. The extent of glycosylation and sialylation are tissue and context specific. Post-translationally, glycated in plasma VLDL. Phosphorylated by FAM20C in the extracellular medium.

The protein localises to the secreted. It is found in the extracellular space. It localises to the extracellular matrix. Its subcellular location is the extracellular vesicle. The protein resides in the endosome. The protein localises to the multivesicular body. APOE is an apolipoprotein, a protein associating with lipid particles, that mainly functions in lipoprotein-mediated lipid transport between organs via the plasma and interstitial fluids. APOE is a core component of plasma lipoproteins and is involved in their production, conversion and clearance. Apolipoproteins are amphipathic molecules that interact both with lipids of the lipoprotein particle core and the aqueous environment of the plasma. As such, APOE associates with chylomicrons, chylomicron remnants, very low density lipoproteins (VLDL) and intermediate density lipoproteins (IDL) but shows a preferential binding to high-density lipoproteins (HDL). It also binds a wide range of cellular receptors including the LDL receptor/LDLR and the very low-density lipoprotein receptor/VLDLR that mediate the cellular uptake of the APOE-containing lipoprotein particles. Finally, APOE also has a heparin-binding activity and binds heparan-sulfate proteoglycans on the surface of cells, a property that supports the capture and the receptor-mediated uptake of APOE-containing lipoproteins by cells. The polypeptide is Apolipoprotein E (APOE) (Physeter macrocephalus (Sperm whale)).